The following is a 236-amino-acid chain: MATPHIAANPGDFADTVLMPGDPLRAKHIAETYLANPVLVNDVRGMLGYTGEYRGRMLSVMGSGMGVPSISIYAHELFTQFNVKNIVRIGSCGSIRDEVKVRDIVIGMGAGTDSLVNRVRLNHYDFAAIADYDLLEPVVNAARRREARFHVGALFTTDLFYAADPGLTERLSAHGVKAVEMEAAGLYGVAAECGGKALALCTVSDHLLSGERLSPEERRTSFNDMVEIALEAAVGF.

H5 provides a ligand contact to a purine D-ribonucleoside. Phosphate is bound by residues G21, R25, R44, and 88–91 (RIGS). A purine D-ribonucleoside contacts are provided by residues 180–182 (EME) and 204–205 (SD). D205 acts as the Proton donor in catalysis.

This sequence belongs to the PNP/UDP phosphorylase family. Homohexamer; trimer of homodimers.

The enzyme catalyses a purine D-ribonucleoside + phosphate = a purine nucleobase + alpha-D-ribose 1-phosphate. It catalyses the reaction a purine 2'-deoxy-D-ribonucleoside + phosphate = a purine nucleobase + 2-deoxy-alpha-D-ribose 1-phosphate. In terms of biological role, catalyzes the reversible phosphorolytic breakdown of the N-glycosidic bond in the beta-(deoxy)ribonucleoside molecules, with the formation of the corresponding free purine bases and pentose-1-phosphate. In Hahella chejuensis (strain KCTC 2396), this protein is Purine nucleoside phosphorylase DeoD-type.